A 388-amino-acid polypeptide reads, in one-letter code: Reducing end xylose-releasing exo-oligoxylanase (388 aa).

The Proton donor role is filled by Glu-70. Residue Asp-263 is the Proton acceptor of the active site.

It belongs to the glycosyl hydrolase 8 (cellulase D) family.

The catalysed reaction is Hydrolysis of (1-&gt;4)-beta-D-xylose residues from the reducing end of oligosaccharides.. In terms of biological role, hydrolyzes xylooligosaccharides with a degree of polymerization of greater than or equal to 3, releasing xylose from the reducing end. Only hydrolyzes the beta anomers of xylooligosaccharides, with inversion of anomeric configuration. Hydrolyzes the glucose and xylose-based trisaccharides where xylose is located at the -1 subsite, GXX, XXG and GXG. Does not hydrolyze xylan, chitosan, lichenan, curdlan or carboxymethylcellulose. The protein is Reducing end xylose-releasing exo-oligoxylanase of Halalkalibacterium halodurans (strain ATCC BAA-125 / DSM 18197 / FERM 7344 / JCM 9153 / C-125) (Bacillus halodurans).